The chain runs to 259 residues: Protein-L-isoaspartate O-methyltransferase (259 aa).

The tract at residues 1 to 25 (MRKRVDPPAGGRLAPGITPANSNTR) is disordered. The active site involves Ser-107.

The protein belongs to the methyltransferase superfamily. L-isoaspartyl/D-aspartyl protein methyltransferase family.

It localises to the cytoplasm. It catalyses the reaction [protein]-L-isoaspartate + S-adenosyl-L-methionine = [protein]-L-isoaspartate alpha-methyl ester + S-adenosyl-L-homocysteine. Functionally, catalyzes the methyl esterification of L-isoaspartyl residues in peptides and proteins that result from spontaneous decomposition of normal L-aspartyl and L-asparaginyl residues. It plays a role in the repair and/or degradation of damaged proteins. This chain is Protein-L-isoaspartate O-methyltransferase, found in Bordetella bronchiseptica (strain ATCC BAA-588 / NCTC 13252 / RB50) (Alcaligenes bronchisepticus).